The sequence spans 526 residues: MSRKSTYPKVMCTQHPDSASRYISTQEEPGEAIEAAVVFGCDEYMPDYEGKATPYHQNVQIVSRLIEETDLVPGKDVFITPRAPSAVQENRFRQLMVMMSIAEANHGALEYSDVQAINEFVHPMTGTVREILDAQQHMVDVSELAKKEFGFAMEVPRIIPLIEDAPALLHAKELTENTLLAWKERFGTVPEKFRVFLGKSDSALSFGHVASTLSCKYAINGLSELNFELETETGIVFGAGTLPFRGHLDLKNAENFFREYRGIGTITLQSALRYSHEKGDAEALVDLAKEKLPEIPELFSAEEKEELVNLIGIFGTRYSLIIRELASTINRLSDLLPQQRDRLMHRGSGGYSRSAPDISGIVSLCRTDIGKELLASMPAEDLHLPRAIKFTGALYSIGLPPEFIGTGAALNEAREKLGDEACERLLTKYFPSLVSDLNFATGYLDLNVASRFLSGACFKEVSKDIEILHETLGLETHPEPSYRILLEMMQPELLQAGTSGNCMDEEVSQLVCSTLTKMGKIRKALG.

Belongs to the PEPCase type 2 family. Homotetramer. Requires Mg(2+) as cofactor.

It catalyses the reaction oxaloacetate + phosphate = phosphoenolpyruvate + hydrogencarbonate. Its function is as follows. Catalyzes the irreversible beta-carboxylation of phosphoenolpyruvate (PEP) to form oxaloacetate (OAA), a four-carbon dicarboxylic acid source for the tricarboxylic acid cycle. The protein is Phosphoenolpyruvate carboxylase of Methanosarcina acetivorans (strain ATCC 35395 / DSM 2834 / JCM 12185 / C2A).